The sequence spans 273 residues: Inactive endochitinase At2g43600 (273 aa).

The first 22 residues, 1–22, serve as a signal peptide directing secretion; the sequence is MTIKNVIFSLFILAILAETVFS. The Chitin-binding type-1 domain maps to 23-61; it reads QNCMDTSCPGLKECCSRWGFCGTKDEYCGFFCFSGPCNI. 4 cysteine pairs are disulfide-bonded: Cys-25/Cys-37, Cys-30/Cys-43, Cys-36/Cys-50, and Cys-54/Cys-59. The interval 78–273 is catalytic; the sequence is GKIETVITSA…GVTPDQGLDC (196 aa). Asn-99 is a glycosylation site (N-linked (GlcNAc...) asparagine).

This sequence belongs to the glycosyl hydrolase 19 family. Chitinase class I subfamily.

This is Inactive endochitinase At2g43600 from Arabidopsis thaliana (Mouse-ear cress).